A 98-amino-acid chain; its full sequence is NADH-ubiquinone oxidoreductase chain 4L (98 aa).

A run of 3 helical transmembrane segments spans residues 1–21 (MMSI…GVLI), 28–48 (STLL…ALLI), and 59–79 (APLI…ALLV).

This sequence belongs to the complex I subunit 4L family. As to quaternary structure, core subunit of respiratory chain NADH dehydrogenase (Complex I) which is composed of 45 different subunits.

The protein localises to the mitochondrion inner membrane. The catalysed reaction is a ubiquinone + NADH + 5 H(+)(in) = a ubiquinol + NAD(+) + 4 H(+)(out). Core subunit of the mitochondrial membrane respiratory chain NADH dehydrogenase (Complex I) which catalyzes electron transfer from NADH through the respiratory chain, using ubiquinone as an electron acceptor. Part of the enzyme membrane arm which is embedded in the lipid bilayer and involved in proton translocation. The sequence is that of NADH-ubiquinone oxidoreductase chain 4L (MT-ND4L) from Lagorchestes hirsutus (Rufous hare-wallaby).